The primary structure comprises 686 residues: DNA ligase (686 aa).

Residues 34–38 (DAEYD), 83–84 (SI), and Glu-120 contribute to the NAD(+) site. Catalysis depends on Lys-122, which acts as the N6-AMP-lysine intermediate. Residues Arg-143, Glu-180, Lys-298, and Lys-322 each coordinate NAD(+). The Zn(2+) site is built by Cys-420, Cys-423, Cys-438, and Cys-444. The BRCT domain occupies 603–686 (QSGGILSGKT…ALLGSNKKNG (84 aa)).

This sequence belongs to the NAD-dependent DNA ligase family. LigA subfamily. Mg(2+) serves as cofactor. The cofactor is Mn(2+).

The catalysed reaction is NAD(+) + (deoxyribonucleotide)n-3'-hydroxyl + 5'-phospho-(deoxyribonucleotide)m = (deoxyribonucleotide)n+m + AMP + beta-nicotinamide D-nucleotide.. In terms of biological role, DNA ligase that catalyzes the formation of phosphodiester linkages between 5'-phosphoryl and 3'-hydroxyl groups in double-stranded DNA using NAD as a coenzyme and as the energy source for the reaction. It is essential for DNA replication and repair of damaged DNA. This is DNA ligase from Thiobacillus denitrificans (strain ATCC 25259 / T1).